Consider the following 70-residue polypeptide: Probable tautomerase RSp0893 (70 aa).

Pro2 serves as the catalytic Proton acceptor; via imino nitrogen.

This sequence belongs to the 4-oxalocrotonate tautomerase family.

This Ralstonia nicotianae (strain ATCC BAA-1114 / GMI1000) (Ralstonia solanacearum) protein is Probable tautomerase RSp0893.